Here is a 186-residue protein sequence, read N- to C-terminus: Ribosome-recycling factor (186 aa).

It belongs to the RRF family.

It localises to the cytoplasm. Its function is as follows. Responsible for the release of ribosomes from messenger RNA at the termination of protein biosynthesis. May increase the efficiency of translation by recycling ribosomes from one round of translation to another. The chain is Ribosome-recycling factor from Rickettsia canadensis (strain McKiel).